The sequence spans 173 residues: RTX-III toxin-activating lysine-acyltransferase ApxIIC (173 aa).

Catalysis depends on residues histidine 29 and aspartate 98.

It belongs to the RTX toxin acyltransferase family. As to quaternary structure, homodimer.

The protein resides in the cytoplasm. The enzyme catalyses a fatty acyl-[ACP] + L-lysyl-[protein] = N(6)-(fatty acyl)-L-lysyl-[protein] + holo-[ACP] + H(+). Its function is as follows. Protein-lysine acyltransferase that catalyzes fatty acylation of the protoxin, thereby converting it to the active toxin. The polypeptide is RTX-III toxin-activating lysine-acyltransferase ApxIIC (apxIIIC) (Actinobacillus pleuropneumoniae (Haemophilus pleuropneumoniae)).